Reading from the N-terminus, the 373-residue chain is Mitochondrial fission regulator 2 (373 aa).

Ser-136 bears the Phosphoserine mark. Residues 151 to 179 (VSEAAIKKIAALEDELTSLRAQIAAIVAM) adopt a coiled-coil conformation. 2 disordered regions span residues 189-331 (GFIS…WDPV) and 346-373 (DDSF…GSRF). The span at 224 to 239 (SPPPLPPPPPPLPPPQ) shows a compositional bias: pro residues. 2 stretches are compositionally biased toward basic and acidic residues: residues 275-287 (KKTD…ESQR) and 297-310 (VLKD…RPVE). 2 positions are modified to phosphoserine: Ser-312 and Ser-348. Positions 354–373 (RSWQGSPFSSPETSRNGSRF) are enriched in polar residues.

Belongs to the MTFR1 family.

The protein localises to the mitochondrion. Its function is as follows. May play a role in mitochondrial aerobic respiration essentially in the testis. Can also promote mitochondrial fission. The polypeptide is Mitochondrial fission regulator 2 (Mtfr2) (Rattus norvegicus (Rat)).